A 240-amino-acid chain; its full sequence is Ribonuclease PH (240 aa).

Phosphate contacts are provided by residues Arg87 and 125 to 127 (GTR).

Belongs to the RNase PH family. Homohexameric ring arranged as a trimer of dimers.

The enzyme catalyses tRNA(n+1) + phosphate = tRNA(n) + a ribonucleoside 5'-diphosphate. In terms of biological role, phosphorolytic 3'-5' exoribonuclease that plays an important role in tRNA 3'-end maturation. Removes nucleotide residues following the 3'-CCA terminus of tRNAs; can also add nucleotides to the ends of RNA molecules by using nucleoside diphosphates as substrates, but this may not be physiologically important. Probably plays a role in initiation of 16S rRNA degradation (leading to ribosome degradation) during starvation. The protein is Ribonuclease PH of Crocosphaera subtropica (strain ATCC 51142 / BH68) (Cyanothece sp. (strain ATCC 51142)).